The chain runs to 508 residues: Protein ultraspiracle (508 aa).

Residues 1-103 form a modulating region; the sequence is MDNCDQDASF…NHPLSGSKHL (103 aa). 2 disordered regions span residues 21–40 and 55–92; these read PDIS…KAES and PGSN…QQYP. Positions 24 to 35 are enriched in polar residues; sequence SQLNDSNNSSFS. Position 35 is a phosphoserine (Ser-35). Residues 57–90 are compositionally biased toward low complexity; that stretch reads SNSASSNNNSAGDAQMAQAPNSAGGSAAAAVQQQ. NR C4-type zinc fingers lie at residues 104 to 124 and 140 to 164; these read CSIC…CEGC and CREN…YQKC. The segment at residues 104–169 is a DNA-binding region (nuclear receptor); that stretch reads CSICGDRASG…RYQKCLTCGM (66 aa). The segment at 170–223 is hinge; it reads KREAVQEERQRGARNAAGRLSASGGGSSGPGSVGGSSSQGGGGGGGVSGGMGSG. The segment at 178-228 is disordered; the sequence is RQRGARNAAGRLSASGGGSSGPGSVGGSSSQGGGGGGGVSGGMGSGNGSDD. A compositionally biased stretch (gly residues) spans 192–224; sequence SGGGSSGPGSVGGSSSQGGGGGGGVSGGMGSGN. An NR LBD domain is found at 239 to 498; sequence SIERIIEAEQ…ELFLEQLEAP (260 aa).

The protein belongs to the nuclear hormone receptor family. NR2 subfamily. Heterodimer of USP and ECR. Only the heterodimer is capable of high-affinity binding to ecdysone.

The protein resides in the nucleus. Functionally, receptor for ecdysone. May be an important modulator of insect metamorphosis. Plays an important part in embryonic and post-embryonic development. Binds to ecdysone response elements (ECRES) such as in the promoter region of s15 chorion gene. This is Protein ultraspiracle (usp) from Drosophila melanogaster (Fruit fly).